We begin with the raw amino-acid sequence, 231 residues long: Cytochrome c oxidase subunit 2 (231 aa).

Over 1–14 (MATPAQLGLQNATS) the chain is Mitochondrial intermembrane. The helical transmembrane segment at 15–45 (PIMEELIAFHDHALMIIFLISSLVLYIISLM) threads the bilayer. Topologically, residues 46 to 59 (LTTKLTHTSTMNAQ) are mitochondrial matrix. A helical membrane pass occupies residues 60–87 (EIEMIWTILPAIILIMIALPSLRILYMT). Topologically, residues 88–231 (DEFNKPYLTL…WASYLYIVSL (144 aa)) are mitochondrial intermembrane. Cu cation contacts are provided by histidine 161, cysteine 196, glutamate 198, cysteine 200, histidine 204, and methionine 207. Residue glutamate 198 coordinates Mg(2+).

This sequence belongs to the cytochrome c oxidase subunit 2 family. In terms of assembly, component of the cytochrome c oxidase (complex IV, CIV), a multisubunit enzyme composed of 14 subunits. The complex is composed of a catalytic core of 3 subunits MT-CO1, MT-CO2 and MT-CO3, encoded in the mitochondrial DNA, and 11 supernumerary subunits COX4I, COX5A, COX5B, COX6A, COX6B, COX6C, COX7A, COX7B, COX7C, COX8 and NDUFA4, which are encoded in the nuclear genome. The complex exists as a monomer or a dimer and forms supercomplexes (SCs) in the inner mitochondrial membrane with NADH-ubiquinone oxidoreductase (complex I, CI) and ubiquinol-cytochrome c oxidoreductase (cytochrome b-c1 complex, complex III, CIII), resulting in different assemblies (supercomplex SCI(1)III(2)IV(1) and megacomplex MCI(2)III(2)IV(2)). Found in a complex with TMEM177, COA6, COX18, COX20, SCO1 and SCO2. Interacts with TMEM177 in a COX20-dependent manner. Interacts with COX20. Interacts with COX16. It depends on Cu cation as a cofactor.

The protein resides in the mitochondrion inner membrane. The enzyme catalyses 4 Fe(II)-[cytochrome c] + O2 + 8 H(+)(in) = 4 Fe(III)-[cytochrome c] + 2 H2O + 4 H(+)(out). Component of the cytochrome c oxidase, the last enzyme in the mitochondrial electron transport chain which drives oxidative phosphorylation. The respiratory chain contains 3 multisubunit complexes succinate dehydrogenase (complex II, CII), ubiquinol-cytochrome c oxidoreductase (cytochrome b-c1 complex, complex III, CIII) and cytochrome c oxidase (complex IV, CIV), that cooperate to transfer electrons derived from NADH and succinate to molecular oxygen, creating an electrochemical gradient over the inner membrane that drives transmembrane transport and the ATP synthase. Cytochrome c oxidase is the component of the respiratory chain that catalyzes the reduction of oxygen to water. Electrons originating from reduced cytochrome c in the intermembrane space (IMS) are transferred via the dinuclear copper A center (CU(A)) of subunit 2 and heme A of subunit 1 to the active site in subunit 1, a binuclear center (BNC) formed by heme A3 and copper B (CU(B)). The BNC reduces molecular oxygen to 2 water molecules using 4 electrons from cytochrome c in the IMS and 4 protons from the mitochondrial matrix. The chain is Cytochrome c oxidase subunit 2 (MT-CO2) from Aotus nigriceps (Black-headed night monkey).